We begin with the raw amino-acid sequence, 261 residues long: Secreted RxLR effector protein 154 (261 aa).

Residues 1–18 (MRRCALLFRLFLISYSCS) form the signal peptide. The short motif at 49–64 (RILQADDPEHIRTEER) is the RxLR-dEER element.

It belongs to the RxLR effector family.

It localises to the secreted. The protein resides in the host cell membrane. Its function is as follows. Secreted effector that completely suppresses the host cell death induced by cell death-inducing proteins. This chain is Secreted RxLR effector protein 154, found in Plasmopara viticola (Downy mildew of grapevine).